The primary structure comprises 499 residues: GTPase Der (499 aa).

EngA-type G domains are found at residues proline 3–leucine 166 and isoleucine 213–threonine 386. GTP is bound by residues glycine 9–serine 16, aspartate 56–isoleucine 60, asparagine 118–aspartate 121, glycine 219–serine 226, aspartate 266–valine 270, and asparagine 331–aspartate 334. One can recognise a KH-like domain in the interval arginine 387–alanine 471. The segment at glycine 476–lysine 499 is disordered. The segment covering glutamine 488–lysine 499 has biased composition (basic residues).

This sequence belongs to the TRAFAC class TrmE-Era-EngA-EngB-Septin-like GTPase superfamily. EngA (Der) GTPase family. Associates with the 50S ribosomal subunit.

GTPase that plays an essential role in the late steps of ribosome biogenesis. This is GTPase Der from Aeromonas salmonicida (strain A449).